The sequence spans 332 residues: C4-dicarboxylate-binding periplasmic protein DctP (332 aa).

The N-terminal stretch at 1–22 (MFKPLTLIAASILAVTSFNAAA) is a signal peptide.

It belongs to the bacterial solute-binding protein 7 family. The complex comprises the extracytoplasmic solute receptor protein DctP, and the two transmembrane proteins DctQ and DctM.

It is found in the periplasm. Part of the tripartite ATP-independent periplasmic (TRAP) transport system DctPQM involved in C4-dicarboxylates uptake. The sequence is that of C4-dicarboxylate-binding periplasmic protein DctP from Vibrio cholerae serotype O1 (strain ATCC 39315 / El Tor Inaba N16961).